The primary structure comprises 348 residues: tRNA N6-adenosine threonylcarbamoyltransferase (348 aa).

Fe cation-binding residues include H111 and H115. Substrate contacts are provided by residues L134–G138, D167, G180, and N276. Fe cation is bound at residue D304.

The protein belongs to the KAE1 / TsaD family. Fe(2+) serves as cofactor.

It localises to the cytoplasm. The catalysed reaction is L-threonylcarbamoyladenylate + adenosine(37) in tRNA = N(6)-L-threonylcarbamoyladenosine(37) in tRNA + AMP + H(+). In terms of biological role, required for the formation of a threonylcarbamoyl group on adenosine at position 37 (t(6)A37) in tRNAs that read codons beginning with adenine. Is involved in the transfer of the threonylcarbamoyl moiety of threonylcarbamoyl-AMP (TC-AMP) to the N6 group of A37, together with TsaE and TsaB. TsaD likely plays a direct catalytic role in this reaction. The protein is tRNA N6-adenosine threonylcarbamoyltransferase of Bordetella petrii (strain ATCC BAA-461 / DSM 12804 / CCUG 43448).